Consider the following 663-residue polypeptide: Bifunctional polymyxin resistance protein ArnA (663 aa).

The interval 1–304 (MKAVVFAYHD…ELGLVAGMRL (304 aa)) is formyltransferase ArnAFT. His104 serves as the catalytic Proton donor; for formyltransferase activity. (6R)-10-formyltetrahydrofolate contacts are provided by residues Arg114 and 136 to 140 (TMRPD). Residues 316–663 (RLTRVLILGV…GAVSTGVEHD (348 aa)) are dehydrogenase ArnADH. NAD(+) is bound by residues Asp349 and 370–371 (DI). Residues Ala395, Tyr400, and 434-435 (TS) each bind UDP-alpha-D-glucuronate. Glu436 functions as the Proton acceptor; for decarboxylase activity in the catalytic mechanism. Residues Arg462, Asn494, 528–537 (QLVDGGAQKR), and Tyr615 contribute to the UDP-alpha-D-glucuronate site. Catalysis depends on Arg621, which acts as the Proton donor; for decarboxylase activity.

In the N-terminal section; belongs to the Fmt family. UDP-L-Ara4N formyltransferase subfamily. It in the C-terminal section; belongs to the NAD(P)-dependent epimerase/dehydratase family. UDP-glucuronic acid decarboxylase subfamily. In terms of assembly, homohexamer, formed by a dimer of trimers.

The enzyme catalyses UDP-alpha-D-glucuronate + NAD(+) = UDP-beta-L-threo-pentopyranos-4-ulose + CO2 + NADH. The catalysed reaction is UDP-4-amino-4-deoxy-beta-L-arabinose + (6R)-10-formyltetrahydrofolate = UDP-4-deoxy-4-formamido-beta-L-arabinose + (6S)-5,6,7,8-tetrahydrofolate + H(+). It functions in the pathway nucleotide-sugar biosynthesis; UDP-4-deoxy-4-formamido-beta-L-arabinose biosynthesis; UDP-4-deoxy-4-formamido-beta-L-arabinose from UDP-alpha-D-glucuronate: step 1/3. Its pathway is nucleotide-sugar biosynthesis; UDP-4-deoxy-4-formamido-beta-L-arabinose biosynthesis; UDP-4-deoxy-4-formamido-beta-L-arabinose from UDP-alpha-D-glucuronate: step 3/3. It participates in bacterial outer membrane biogenesis; lipopolysaccharide biosynthesis. In terms of biological role, bifunctional enzyme that catalyzes the oxidative decarboxylation of UDP-glucuronic acid (UDP-GlcUA) to UDP-4-keto-arabinose (UDP-Ara4O) and the addition of a formyl group to UDP-4-amino-4-deoxy-L-arabinose (UDP-L-Ara4N) to form UDP-L-4-formamido-arabinose (UDP-L-Ara4FN). The modified arabinose is attached to lipid A and is required for resistance to polymyxin and cationic antimicrobial peptides. This is Bifunctional polymyxin resistance protein ArnA from Aeromonas salmonicida (strain A449).